The chain runs to 783 residues: Centrosomal protein of 89 kDa (783 aa).

The segment at 28-49 (PKAAVPRTPPPRSPNPSPERPR) is disordered. A compositionally biased stretch (pro residues) spans 34–45 (RTPPPRSPNPSP). Serine 50 bears the Phosphoserine mark. Disordered regions lie at residues 63–157 (GRTV…DDLY) and 176–226 (DENI…DITG). Over residues 94–107 (ATTSQLRPRPNWQS) the composition is skewed to polar residues. Composition is skewed to basic and acidic residues over residues 139–155 (ELGD…HSDD) and 196–214 (QQKD…KPPL). 2 coiled-coil regions span residues 234-333 (EITR…SRYQ) and 369-719 (LLLA…GELE).

Its subcellular location is the cytoplasm. It is found in the cytosol. It localises to the cytoskeleton. The protein resides in the microtubule organizing center. The protein localises to the centrosome. Its subcellular location is the spindle pole. It is found in the centriole. It localises to the mitochondrion intermembrane space. In terms of biological role, required for ciliogenesis. Also plays a role in mitochondrial metabolism where it may modulate complex IV activity. The polypeptide is Centrosomal protein of 89 kDa (CEP89) (Homo sapiens (Human)).